A 565-amino-acid polypeptide reads, in one-letter code: Molybdenum cofactor biosynthesis protein 1 (565 aa).

Residues 3–367 (LLARHAIRLL…AVQRKKKQHA (365 aa)) are molybdenum cofactor biosynthesis protein A. The Radical SAM core domain maps to 64 to 276 (SFGRHHTYLR…LQIIRQRWPD (213 aa)). Arg-73 provides a ligand contact to GTP. [4Fe-4S] cluster contacts are provided by Cys-80 and Cys-84. Position 86 (Tyr-86) interacts with S-adenosyl-L-methionine. Cys-87 is a [4Fe-4S] cluster binding site. Arg-123 serves as a coordination point for GTP. S-adenosyl-L-methionine is bound at residue Gly-127. Thr-154 contributes to the GTP binding site. Ser-178 serves as a coordination point for S-adenosyl-L-methionine. Residue Lys-214 coordinates GTP. S-adenosyl-L-methionine is bound at residue Met-248. Cys-311 and Cys-314 together coordinate [4Fe-4S] cluster. 316–318 (RLR) lines the GTP pocket. Residue Cys-328 participates in [4Fe-4S] cluster binding. The For molybdenum cofactor biosynthesis protein C activity role is filled by Asp-525.

This sequence in the C-terminal section; belongs to the MoaC family. The protein in the N-terminal section; belongs to the radical SAM superfamily. MoaA family. As to quaternary structure, isoform Mocs1a and isoform Mocs1b probably form a heterooligomer. The cofactor is [4Fe-4S] cluster.

It carries out the reaction GTP + AH2 + S-adenosyl-L-methionine = (8S)-3',8-cyclo-7,8-dihydroguanosine 5'-triphosphate + 5'-deoxyadenosine + L-methionine + A + H(+). The enzyme catalyses (8S)-3',8-cyclo-7,8-dihydroguanosine 5'-triphosphate = cyclic pyranopterin phosphate + diphosphate. The protein operates within cofactor biosynthesis; molybdopterin biosynthesis. Its function is as follows. Isoform Mocs1a and isoform Mocs1b probably form a complex that catalyzes the conversion of 5'-GTP to cyclic pyranopterin monophosphate (cPMP). Mocs1a catalyzes the cyclization of GTP to (8S)-3',8-cyclo-7,8-dihydroguanosine 5'-triphosphate and Mocs1b catalyzes the subsequent conversion of (8S)-3',8-cyclo-7,8-dihydroguanosine 5'-triphosphate to cPMP. The protein is Molybdenum cofactor biosynthesis protein 1 (Mocs1) of Drosophila melanogaster (Fruit fly).